The following is a 107-amino-acid chain: Nucleoid-associated protein YaaK (107 aa).

Residues 1–24 (MRGGMGNMQKMMKQMQKMQKDMAK) form a disordered region. The span at 8 to 17 (MQKMMKQMQK) shows a compositional bias: low complexity.

The protein belongs to the YbaB/EbfC family. As to quaternary structure, homodimer.

It is found in the cytoplasm. The protein localises to the nucleoid. Binds to DNA and alters its conformation. May be involved in regulation of gene expression, nucleoid organization and DNA protection. The chain is Nucleoid-associated protein YaaK (yaaK) from Bacillus subtilis (strain 168).